Here is a 131-residue protein sequence, read N- to C-terminus: Insertion element IS1 protein InsB (131 aa).

It belongs to the transposase 27 family.

In terms of biological role, absolutely required for transposition of IS1. The protein is Insertion element IS1 protein InsB (insB1) of Shigella flexneri.